The chain runs to 215 residues: Probable GTP-binding protein EngB (215 aa).

The 175-residue stretch at 30 to 204 (EGLEVAFAGR…QMVLAQWLGL (175 aa)) folds into the EngB-type G domain. GTP-binding positions include 38–45 (GRSNAGKS), 64–68 (GRTQL), 82–85 (DLPG), 149–152 (TKAD), and 182–185 (LFSA). The Mg(2+) site is built by S45 and T66.

It belongs to the TRAFAC class TrmE-Era-EngA-EngB-Septin-like GTPase superfamily. EngB GTPase family. It depends on Mg(2+) as a cofactor.

Its function is as follows. Necessary for normal cell division and for the maintenance of normal septation. The polypeptide is Probable GTP-binding protein EngB (Pseudomonas paraeruginosa (strain DSM 24068 / PA7) (Pseudomonas aeruginosa (strain PA7))).